The following is a 285-amino-acid chain: 4-hydroxybenzoate octaprenyltransferase (285 aa).

Helical transmembrane passes span 19–39, 42–62, 82–102, 104–124, 136–156, 166–186, 210–230, 233–253, and 265–285; these read IGSL…ADGL, WHVL…GCVI, LPSG…LVVC, FLLV…GIVL, YLPQ…AYAA, WLLF…YAMV, IIGL…SQLA, GIYY…QWLI, and FLNN…SVLI.

It belongs to the UbiA prenyltransferase family. It depends on Mg(2+) as a cofactor.

The protein resides in the cell inner membrane. It catalyses the reaction all-trans-octaprenyl diphosphate + 4-hydroxybenzoate = 4-hydroxy-3-(all-trans-octaprenyl)benzoate + diphosphate. It functions in the pathway cofactor biosynthesis; ubiquinone biosynthesis. In terms of biological role, catalyzes the prenylation of para-hydroxybenzoate (PHB) with an all-trans polyprenyl group. Mediates the second step in the final reaction sequence of ubiquinone-8 (UQ-8) biosynthesis, which is the condensation of the polyisoprenoid side chain with PHB, generating the first membrane-bound Q intermediate 3-octaprenyl-4-hydroxybenzoate. This chain is 4-hydroxybenzoate octaprenyltransferase, found in Aliivibrio fischeri (strain ATCC 700601 / ES114) (Vibrio fischeri).